Reading from the N-terminus, the 154-residue chain is uncharacterized protein (154 aa).

Disordered stretches follow at residues 23 to 63 (ERVG…VVLK) and 79 to 154 (IKAA…DENE). Positions 43 to 56 (PDEDGDHSDKEDEQ) are enriched in acidic residues. Serine 50 bears the Phosphoserine mark. Lysine 108 carries the post-translational modification N6-acetyllysine. Serine 146 carries the phosphoserine modification.

This is an uncharacterized protein from Homo sapiens (Human).